We begin with the raw amino-acid sequence, 857 residues long: Glucans biosynthesis glucosyltransferase H (857 aa).

6 helical membrane-spanning segments follow: residues 142–162 (ILLTLMIGQTLVAGWYMKGIL), 196–216 (ILILFGILFCWVSAGFWTALM), 515–535 (VFLTGVMSYLSAPLWFFFLVL), 572–592 (LFSTTIVLLFLPKLLSIILIW), 606–626 (TLSMLMEMLFSMLLAPVRMIF), and 682–702 (FLWWLAPIVGSLVLSIPVSVI).

Belongs to the glycosyltransferase 2 family. OpgH subfamily.

Its subcellular location is the cell inner membrane. It participates in glycan metabolism; osmoregulated periplasmic glucan (OPG) biosynthesis. Its function is as follows. Involved in the biosynthesis of osmoregulated periplasmic glucans (OPGs). In Pseudomonas putida (strain W619), this protein is Glucans biosynthesis glucosyltransferase H.